The sequence spans 375 residues: Type II restriction enzyme ApaLI (375 aa).

The enzyme catalyses Endonucleolytic cleavage of DNA to give specific double-stranded fragments with terminal 5'-phosphates.. A subtype P restriction enzyme that recognizes the double-stranded sequence 5'-GTGCAC-3' and cleaves after G-1. This Acetobacter pasteurianus (Acetobacter turbidans) protein is Type II restriction enzyme ApaLI.